The sequence spans 96 residues: Acylphosphatase (96 aa).

In terms of domain architecture, Acylphosphatase-like spans 4–96 (RCEFLIFGKV…ESLNDFEILR (93 aa)). Active-site residues include arginine 19 and asparagine 42.

Belongs to the acylphosphatase family.

The catalysed reaction is an acyl phosphate + H2O = a carboxylate + phosphate + H(+). The polypeptide is Acylphosphatase (acyP) (Helicobacter hepaticus (strain ATCC 51449 / 3B1)).